We begin with the raw amino-acid sequence, 252 residues long: 5'-nucleotidase SurE (252 aa).

Residues aspartate 8, aspartate 9, serine 39, and asparagine 91 each contribute to the a divalent metal cation site.

This sequence belongs to the SurE nucleotidase family. A divalent metal cation is required as a cofactor.

It localises to the cytoplasm. It catalyses the reaction a ribonucleoside 5'-phosphate + H2O = a ribonucleoside + phosphate. Functionally, nucleotidase that shows phosphatase activity on nucleoside 5'-monophosphates. The protein is 5'-nucleotidase SurE of Bordetella petrii (strain ATCC BAA-461 / DSM 12804 / CCUG 43448).